The primary structure comprises 766 residues: Pentatricopeptide repeat-containing protein At5g28460 (766 aa).

PPR repeat units lie at residues 151-181 (TIVA…LDSN), 184-218 (NSQV…ESVF), 221-257 (NRIT…GVSP), 258-292 (NSVW…KTPL), 293-327 (EAPP…KIRP), 328-358 (DVVT…MRGK), 369-404 (DSIH…RCVP), 405-439 (NAVT…EIKP), 440-474 (NVVT…GVKG), 475-509 (NVVT…GCSP), 510-544 (DAKI…GFSL), 545-579 (DLLA…GKKP), 580-614 (DSIT…GLDP), 615-650 (TVTT…KVNP), 651-685 (NTVI…MVRP), and 686-720 (NVET…SCEP).

Belongs to the PPR family. P subfamily.

The sequence is that of Pentatricopeptide repeat-containing protein At5g28460 from Arabidopsis thaliana (Mouse-ear cress).